The following is a 258-amino-acid chain: Imidazole glycerol phosphate synthase subunit HisF (258 aa).

Residues Asp-11 and Asp-130 contribute to the active site.

It belongs to the HisA/HisF family. Heterodimer of HisH and HisF.

It is found in the cytoplasm. It carries out the reaction 5-[(5-phospho-1-deoxy-D-ribulos-1-ylimino)methylamino]-1-(5-phospho-beta-D-ribosyl)imidazole-4-carboxamide + L-glutamine = D-erythro-1-(imidazol-4-yl)glycerol 3-phosphate + 5-amino-1-(5-phospho-beta-D-ribosyl)imidazole-4-carboxamide + L-glutamate + H(+). Its pathway is amino-acid biosynthesis; L-histidine biosynthesis; L-histidine from 5-phospho-alpha-D-ribose 1-diphosphate: step 5/9. IGPS catalyzes the conversion of PRFAR and glutamine to IGP, AICAR and glutamate. The HisF subunit catalyzes the cyclization activity that produces IGP and AICAR from PRFAR using the ammonia provided by the HisH subunit. The protein is Imidazole glycerol phosphate synthase subunit HisF of Shigella flexneri serotype 5b (strain 8401).